Here is a 1073-residue protein sequence, read N- to C-terminus: Semaphorin-6D (1073 aa).

Positions 1–20 are cleaved as a signal peptide; the sequence is MGFLLLWFCVLFLLVSRLRA. Over 21-662 the chain is Extracellular; that stretch reads VSFPEDDEPL…GESNQMVHMN (642 aa). Residues 27–512 form the Sema domain; that stretch reads DEPLNTVDYH…FSSCVVRIPL (486 aa). N-linked (GlcNAc...) asparagine glycosylation is present at Asn51. 4 cysteine pairs are disulfide-bonded: Cys108–Cys118, Cys136–Cys145, Cys259–Cys370, and Cys284–Cys329. Residue Asn283 is glycosylated (N-linked (GlcNAc...) asparagine). N-linked (GlcNAc...) asparagine glycans are attached at residues Asn435 and Asn461. 4 disulfides stabilise this stretch: Cys477-Cys506, Cys515-Cys533, Cys521-Cys568, and Cys525-Cys541. The PSI domain occupies 514-569; it reads RCERYGSCKKSCIASRDPYCGWLSQGVCERVTLGMLPGGYEQDTEYGNTAHLGDCH. An N-linked (GlcNAc...) asparagine glycan is attached at Asn631. The helical transmembrane segment at 663 to 683 threads the bilayer; sequence VLITCVFAAFVLGAFIAGVAV. Over 684-1073 the chain is Cytoplasmic; sequence YCYRDMFVRK…SVRPLNKYTY (390 aa). A phosphoserine mark is found at Ser723, Ser734, and Ser744. 4 disordered regions span residues 745–825, 839–876, 919–986, and 1021–1073; these read RKEL…GHIP, TSFS…VDSR, PPKV…SPNG, and LQPS…KYTY. Position 773 is a phosphothreonine (Thr773). Positions 790–806 are enriched in basic and acidic residues; sequence SHSEKAHSHGASRKEHP. Phosphoserine occurs at positions 931, 957, and 983. Polar residues predominate over residues 931 to 942; that stretch reads SPPSTLPRNSPT. 2 stretches are compositionally biased toward polar residues: residues 1021–1037 and 1059–1073; these read LQPS…NGTL and VPQT…KYTY.

It belongs to the semaphorin family. As to expression, expressed in brain and lung.

The protein localises to the cell membrane. Shows growth cone collapsing activity on dorsal root ganglion (DRG) neurons in vitro. May be a stop signal for the DRG neurons in their target areas, and possibly also for other neurons. May also be involved in the maintenance and remodeling of neuronal connections. Ligand of TREM2 with PLXNA1 as coreceptor in dendritic cells, plays a role in the generation of immune responses and skeletal homeostasis. The chain is Semaphorin-6D (Sema6d) from Mus musculus (Mouse).